The sequence spans 122 residues: Small ribosomal subunit protein uS13 (122 aa).

The disordered stretch occupies residues 99 to 122 (RGQRTHTNARTRKGPAKAIAGKKK).

Belongs to the universal ribosomal protein uS13 family. In terms of assembly, part of the 30S ribosomal subunit. Forms a loose heterodimer with protein S19. Forms two bridges to the 50S subunit in the 70S ribosome.

Functionally, located at the top of the head of the 30S subunit, it contacts several helices of the 16S rRNA. In the 70S ribosome it contacts the 23S rRNA (bridge B1a) and protein L5 of the 50S subunit (bridge B1b), connecting the 2 subunits; these bridges are implicated in subunit movement. Contacts the tRNAs in the A and P-sites. This Rhodopseudomonas palustris (strain BisB5) protein is Small ribosomal subunit protein uS13.